The sequence spans 752 residues: Photosystem I P700 chlorophyll a apoprotein A1 (752 aa).

A run of 8 helical transmembrane segments spans residues 73-96 (IFSA…FHGA), 159-182 (LYWT…FHYH), 198-222 (MNHH…HIAL), 294-312 (IAHH…GHMY), 349-372 (WHAQ…HHMY), 388-414 (LSLF…IFMV), 436-458 (AIIS…FYIH), and 533-551 (FMVH…LILL). 2 residues coordinate [4Fe-4S] cluster: Cys575 and Cys584. 2 helical membrane passes run 591 to 612 (HVFL…HFSW) and 666 to 688 (SSAY…MFLF). His677 contacts chlorophyll a'. Chlorophyll a-binding residues include Met685 and Tyr693. Phylloquinone is bound at residue Trp694. Residues 726–746 (AVGLAHYLLGGIGTTWAFFLA) traverse the membrane as a helical segment.

The protein belongs to the PsaA/PsaB family. As to quaternary structure, the PsaA/B heterodimer binds the P700 chlorophyll special pair and subsequent electron acceptors. PSI consists of a core antenna complex that captures photons, and an electron transfer chain that converts photonic excitation into a charge separation. The eukaryotic PSI reaction center is composed of at least 11 subunits. P700 is a chlorophyll a/chlorophyll a' dimer, A0 is one or more chlorophyll a, A1 is one or both phylloquinones and FX is a shared 4Fe-4S iron-sulfur center. serves as cofactor.

It localises to the plastid. The protein resides in the chloroplast thylakoid membrane. It carries out the reaction reduced [plastocyanin] + hnu + oxidized [2Fe-2S]-[ferredoxin] = oxidized [plastocyanin] + reduced [2Fe-2S]-[ferredoxin]. PsaA and PsaB bind P700, the primary electron donor of photosystem I (PSI), as well as the electron acceptors A0, A1 and FX. PSI is a plastocyanin/cytochrome c6-ferredoxin oxidoreductase, converting photonic excitation into a charge separation, which transfers an electron from the donor P700 chlorophyll pair to the spectroscopically characterized acceptors A0, A1, FX, FA and FB in turn. Oxidized P700 is reduced on the lumenal side of the thylakoid membrane by plastocyanin or cytochrome c6. The polypeptide is Photosystem I P700 chlorophyll a apoprotein A1 (Thalassiosira pseudonana (Marine diatom)).